The chain runs to 531 residues: MTKYIFVTGGVVSSLGKGITAASLGRLLKNRGLNVTIQKFDPYINVDPGTMSPYQHGEVFVTDDGAETDLDLGHYERFIDINLNKYSNVTTGKIYSAVIRKERRGDYLGGTVQVIPHITNEIKERVFRAGRETNADVVITEIGGTVGDIESLPFLEAIRQIKSDVGRENVMYIHCTLVPYIKAAGEMKTKPTQHSVKELRSLGIQPNVIVVRTEMPMPQEMKEKIALFCDIDPKAVIEARDADTLYAVPLMLQEQKLDQIVCEHLRLNCREADMTEWKALVEKVRNLSKTTKIALVGKYVELPDAYISVVEALRHAGYAFDTDIDIQWINAEHVTRDNVADLLKDADGILVPGGFGDRGVEGKIEAIRYAREQRVPFLGICLGMQLASIEFARHVVGLSGAHSSEFDPNTPHPIIDLLPEQKDVEDLGGTLRLGLYPCKLQEGTLAYAAYGDEVIYERHRHRYEFNNQYRPIMEEHGFVFSGTSPDGRLVEVIELKDHPWFVAAQFHPEFTSRPTRPQPLFREFVRASLKE.

Residues 1 to 267 (MTKYIFVTGG…DQIVCEHLRL (267 aa)) form an amidoligase domain region. Ser13 is a CTP binding site. Ser13 serves as a coordination point for UTP. Position 14 to 19 (14 to 19 (SLGKGI)) interacts with ATP. L-glutamine is bound at residue Tyr54. Residue Asp71 coordinates ATP. Asp71 and Glu141 together coordinate Mg(2+). CTP is bound by residues 148-150 (DIE), 188-193 (KTKPTQ), and Lys224. UTP-binding positions include 188 to 193 (KTKPTQ) and Lys224. An ATP-binding site is contributed by 240 to 242 (RDA). Residues 292–531 (KIALVGKYVE…REFVRASLKE (240 aa)) enclose the Glutamine amidotransferase type-1 domain. Position 354 (Gly354) interacts with L-glutamine. The active-site Nucleophile; for glutamine hydrolysis is Cys381. L-glutamine-binding positions include 382–385 (LGMQ), Glu405, and Arg462. Residues His507 and Glu509 contribute to the active site.

This sequence belongs to the CTP synthase family. In terms of assembly, homotetramer.

The catalysed reaction is UTP + L-glutamine + ATP + H2O = CTP + L-glutamate + ADP + phosphate + 2 H(+). The enzyme catalyses L-glutamine + H2O = L-glutamate + NH4(+). It carries out the reaction UTP + NH4(+) + ATP = CTP + ADP + phosphate + 2 H(+). It functions in the pathway pyrimidine metabolism; CTP biosynthesis via de novo pathway; CTP from UDP: step 2/2. Allosterically activated by GTP, when glutamine is the substrate; GTP has no effect on the reaction when ammonia is the substrate. The allosteric effector GTP functions by stabilizing the protein conformation that binds the tetrahedral intermediate(s) formed during glutamine hydrolysis. Inhibited by the product CTP, via allosteric rather than competitive inhibition. Catalyzes the ATP-dependent amination of UTP to CTP with either L-glutamine or ammonia as the source of nitrogen. Regulates intracellular CTP levels through interactions with the four ribonucleotide triphosphates. The sequence is that of CTP synthase from Geobacillus kaustophilus (strain HTA426).